Reading from the N-terminus, the 640-residue chain is Threonine--tRNA ligase (640 aa).

The 61-residue stretch at 1 to 61 folds into the TGS domain; it reads MPVITLPDGS…SNDATLQIIT (61 aa). A catalytic region spans residues 242-533; it reads DHRKIGKQLD…LIEHYAGVFP (292 aa). The Zn(2+) site is built by Cys333, His384, and His510.

This sequence belongs to the class-II aminoacyl-tRNA synthetase family. Homodimer. Requires Zn(2+) as cofactor.

The protein localises to the cytoplasm. It carries out the reaction tRNA(Thr) + L-threonine + ATP = L-threonyl-tRNA(Thr) + AMP + diphosphate + H(+). Functionally, catalyzes the attachment of threonine to tRNA(Thr) in a two-step reaction: L-threonine is first activated by ATP to form Thr-AMP and then transferred to the acceptor end of tRNA(Thr). Also edits incorrectly charged L-seryl-tRNA(Thr). This Pseudomonas putida (strain ATCC 47054 / DSM 6125 / CFBP 8728 / NCIMB 11950 / KT2440) protein is Threonine--tRNA ligase.